Consider the following 423-residue polypeptide: Haloacid dehalogenase-like hydrolase domain-containing 5 (423 aa).

Positions 1-23 (MAAWGCVAALGAARGLCWRAARA) are cleaved as a signal peptide.

The protein belongs to the HAD-like hydrolase superfamily. As to expression, widely expressed.

This Homo sapiens (Human) protein is Haloacid dehalogenase-like hydrolase domain-containing 5.